Consider the following 122-residue polypeptide: Double-headed protease inhibitor, submandibular gland (122 aa).

Kazal-like domains follow at residues Gly10–Ile70 and Glu71–Ser121. 6 disulfides stabilise this stretch: Cys16/Cys50, Cys28/Cys47, Cys36/Cys68, Cys72/Cys101, Cys79/Cys98, and Cys87/Cys119.

It is found in the secreted. Its function is as follows. This inhibitor is composed of two homologous actively inhibiting halves: one which inhibits trypsin, the other which inhibits elastase. In Panthera uncia (Snow leopard), this protein is Double-headed protease inhibitor, submandibular gland.